Here is a 61-residue protein sequence, read N- to C-terminus: UPF0337 protein LMOf2365_2190 (61 aa).

A disordered region spans residues 1–61; that stretch reads MSEDKGMKDK…TGDAKKKLSE (61 aa).

This sequence belongs to the UPF0337 (CsbD) family.

The polypeptide is UPF0337 protein LMOf2365_2190 (Listeria monocytogenes serotype 4b (strain F2365)).